Consider the following 186-residue polypeptide: Phosphoheptose isomerase (186 aa).

The region spanning 33–186 (LCECLKKGGK…TLCQIIDEGF (154 aa)) is the SIS domain. 48–50 (NGG) contacts substrate. Histidine 57 and glutamate 61 together coordinate Zn(2+). Substrate-binding positions include glutamate 61, 90–91 (ND), 116–118 (STS), serine 121, and glutamine 168. Zn(2+)-binding residues include glutamine 168 and histidine 176.

It belongs to the SIS family. GmhA subfamily. Homotetramer. Zn(2+) is required as a cofactor.

It localises to the cytoplasm. The catalysed reaction is 2 D-sedoheptulose 7-phosphate = D-glycero-alpha-D-manno-heptose 7-phosphate + D-glycero-beta-D-manno-heptose 7-phosphate. It functions in the pathway carbohydrate biosynthesis; D-glycero-D-manno-heptose 7-phosphate biosynthesis; D-glycero-alpha-D-manno-heptose 7-phosphate and D-glycero-beta-D-manno-heptose 7-phosphate from sedoheptulose 7-phosphate: step 1/1. Catalyzes the isomerization of sedoheptulose 7-phosphate in D-glycero-D-manno-heptose 7-phosphate. The chain is Phosphoheptose isomerase from Campylobacter jejuni subsp. jejuni serotype O:6 (strain 81116 / NCTC 11828).